The sequence spans 120 residues: Cell cycle protein GpsB (120 aa).

A coiled-coil region spans residues 32-68; it reads LDDIIKDYETYAALVKELREENRRLKEELAAKPVEKA. Positions 63–88 are disordered; it reads KPVEKAPVQPTQPVQSTQATQSTVES. The span at 68–86 shows a compositional bias: low complexity; that stretch reads APVQPTQPVQSTQATQSTV.

Belongs to the GpsB family. Forms polymers through the coiled coil domains. Interacts with PBP1, MreC and EzrA.

The protein localises to the cytoplasm. In terms of biological role, divisome component that associates with the complex late in its assembly, after the Z-ring is formed, and is dependent on DivIC and PBP2B for its recruitment to the divisome. Together with EzrA, is a key component of the system that regulates PBP1 localization during cell cycle progression. Its main role could be the removal of PBP1 from the cell pole after pole maturation is completed. Also contributes to the recruitment of PBP1 to the division complex. Not essential for septum formation. The sequence is that of Cell cycle protein GpsB from Streptococcus sanguinis (strain SK36).